The chain runs to 952 residues: Aminopeptidase 2, mitochondrial (952 aa).

The N-terminal 52 residues, 1 to 52 (MPIVRWLLLKSAVRGSSLIGKAHPCLRSIAAHPRYLSNVYSPPAGVSRSLRI), are a transit peptide targeting the mitochondrion. Substrate is bound by residues glutamate 228 and 360–364 (GAMEN). Asparagine 381 is a glycosylation site (N-linked (GlcNAc...) asparagine). Residue histidine 396 coordinates Zn(2+). The Proton acceptor role is filled by glutamate 397. 2 residues coordinate Zn(2+): histidine 400 and glutamate 419. Asparagine 713 carries N-linked (GlcNAc...) asparagine glycosylation.

This sequence belongs to the peptidase M1 family. The cofactor is Zn(2+).

It localises to the periplasm. The protein resides in the cytoplasm. Its subcellular location is the mitochondrion. Its function is as follows. Involved in the cellular supply of leucine from externally offered leucine-containing dipeptide substrates. The sequence is that of Aminopeptidase 2, mitochondrial (APE2) from Saccharomyces cerevisiae (strain ATCC 204508 / S288c) (Baker's yeast).